The chain runs to 465 residues: Methylenetetrahydrofolate--tRNA-(uracil-5-)-methyltransferase TrmFO (465 aa).

10–15 (GAGLAG) is a binding site for FAD.

Belongs to the MnmG family. TrmFO subfamily. The cofactor is FAD.

The protein resides in the cytoplasm. The enzyme catalyses uridine(54) in tRNA + (6R)-5,10-methylene-5,6,7,8-tetrahydrofolate + NADH + H(+) = 5-methyluridine(54) in tRNA + (6S)-5,6,7,8-tetrahydrofolate + NAD(+). The catalysed reaction is uridine(54) in tRNA + (6R)-5,10-methylene-5,6,7,8-tetrahydrofolate + NADPH + H(+) = 5-methyluridine(54) in tRNA + (6S)-5,6,7,8-tetrahydrofolate + NADP(+). Its function is as follows. Catalyzes the folate-dependent formation of 5-methyl-uridine at position 54 (M-5-U54) in all tRNAs. This chain is Methylenetetrahydrofolate--tRNA-(uracil-5-)-methyltransferase TrmFO, found in Deinococcus radiodurans (strain ATCC 13939 / DSM 20539 / JCM 16871 / CCUG 27074 / LMG 4051 / NBRC 15346 / NCIMB 9279 / VKM B-1422 / R1).